The following is a 330-amino-acid chain: Aspartate--ammonia ligase (330 aa).

This sequence belongs to the class-II aminoacyl-tRNA synthetase family. AsnA subfamily.

The protein localises to the cytoplasm. It carries out the reaction L-aspartate + NH4(+) + ATP = L-asparagine + AMP + diphosphate + H(+). It participates in amino-acid biosynthesis; L-asparagine biosynthesis; L-asparagine from L-aspartate (ammonia route): step 1/1. The protein is Aspartate--ammonia ligase of Streptococcus agalactiae serotype Ia (strain ATCC 27591 / A909 / CDC SS700).